Consider the following 143-residue polypeptide: Large ribosomal subunit protein uL11 (143 aa).

Belongs to the universal ribosomal protein uL11 family. Part of the ribosomal stalk of the 50S ribosomal subunit. Interacts with L10 and the large rRNA to form the base of the stalk. L10 forms an elongated spine to which L12 dimers bind in a sequential fashion forming a multimeric L10(L12)X complex. Post-translationally, one or more lysine residues are methylated.

Its function is as follows. Forms part of the ribosomal stalk which helps the ribosome interact with GTP-bound translation factors. The polypeptide is Large ribosomal subunit protein uL11 (Koribacter versatilis (strain Ellin345)).